Reading from the N-terminus, the 90-residue chain is uncharacterized protein (90 aa).

Positions 36–82 form a coiled coil; it reads DQEYSDAQMQLEDAVNALNKLWLSSNDQQREQLYRMRLQLQSLQNNM.

This is an uncharacterized protein from Bacillus subtilis (strain 168).